The following is a 157-amino-acid chain: Crossover junction endodeoxyribonuclease RuvC (157 aa).

Residues D7, E67, and D140 contribute to the active site. Positions 7, 67, and 140 each coordinate Mg(2+).

This sequence belongs to the RuvC family. In terms of assembly, homodimer which binds Holliday junction (HJ) DNA. The HJ becomes 2-fold symmetrical on binding to RuvC with unstacked arms; it has a different conformation from HJ DNA in complex with RuvA. In the full resolvosome a probable DNA-RuvA(4)-RuvB(12)-RuvC(2) complex forms which resolves the HJ. Requires Mg(2+) as cofactor.

It is found in the cytoplasm. The enzyme catalyses Endonucleolytic cleavage at a junction such as a reciprocal single-stranded crossover between two homologous DNA duplexes (Holliday junction).. Its function is as follows. The RuvA-RuvB-RuvC complex processes Holliday junction (HJ) DNA during genetic recombination and DNA repair. Endonuclease that resolves HJ intermediates. Cleaves cruciform DNA by making single-stranded nicks across the HJ at symmetrical positions within the homologous arms, yielding a 5'-phosphate and a 3'-hydroxyl group; requires a central core of homology in the junction. The consensus cleavage sequence is 5'-(A/T)TT(C/G)-3'. Cleavage occurs on the 3'-side of the TT dinucleotide at the point of strand exchange. HJ branch migration catalyzed by RuvA-RuvB allows RuvC to scan DNA until it finds its consensus sequence, where it cleaves and resolves the cruciform DNA. The protein is Crossover junction endodeoxyribonuclease RuvC of Rickettsia africae (strain ESF-5).